Reading from the N-terminus, the 549-residue chain is MAAKDVRFSADARERLIRGVDLLANAVKVTLGPKGRNVVIEKSFGSPRITKDGVTVAKEIELADKFENMGAQMVREVASKTNDLAGDGTTTATVLAQAIVREGAKAVAAGMNPMDLKRGIDKAVNAIVDELKKRTKKITTPSETAQVGTISANGEAEIGKMISEAMQKVGNEGVITVEEAKGIQTELDVVEGMQFDRGYVSPYFITNPEKMVADLDNPYILIHEKKLSGLQPMLPLLESIVQSGKPLLIIAEDVEGEALATLVVNKLRGGLKIAAVKAPGFGDRRKAMLEDIAILTGGQVISEDLGIKLETVTLNMLGRAKKVLIEKENTTIVEGAGKKADITGRCNQIRAQIEETTSDYDREKLQERLAKLAGGVAVIRVGGASETEVKERKDRVDDALHATRAAVEEGIVPGGGVALARASLAINKLKADNDDQRFGIDIIRKAVLAPMRQIAENAGEDGAVISGKVLDNDDYSFGFDAQSGEFKDMVKAGIIDPTKVVRTALQDAASVAGLLITTEAMVAERPEKKAPAGGDAGMGGMGGMGGMDF.

ATP-binding positions include 30-33 (TLGP), Lys-51, 87-91 (DGTTT), Gly-415, and Asp-496.

The protein belongs to the chaperonin (HSP60) family. As to quaternary structure, forms a cylinder of 14 subunits composed of two heptameric rings stacked back-to-back. Interacts with the co-chaperonin GroES.

It is found in the cytoplasm. It catalyses the reaction ATP + H2O + a folded polypeptide = ADP + phosphate + an unfolded polypeptide.. In terms of biological role, together with its co-chaperonin GroES, plays an essential role in assisting protein folding. The GroEL-GroES system forms a nano-cage that allows encapsulation of the non-native substrate proteins and provides a physical environment optimized to promote and accelerate protein folding. In Acidiphilium cryptum (strain JF-5), this protein is Chaperonin GroEL.